We begin with the raw amino-acid sequence, 204 residues long: Dephospho-CoA kinase (204 aa).

The DPCK domain occupies 4–201 (VIGLTGGIAS…EKYLAMCKKN (198 aa)). 12 to 17 (ASGKTT) contacts ATP.

The protein belongs to the CoaE family.

The protein localises to the cytoplasm. The enzyme catalyses 3'-dephospho-CoA + ATP = ADP + CoA + H(+). The protein operates within cofactor biosynthesis; coenzyme A biosynthesis; CoA from (R)-pantothenate: step 5/5. Its function is as follows. Catalyzes the phosphorylation of the 3'-hydroxyl group of dephosphocoenzyme A to form coenzyme A. The chain is Dephospho-CoA kinase from Vibrio parahaemolyticus serotype O3:K6 (strain RIMD 2210633).